Reading from the N-terminus, the 179-residue chain is Ribosome maturation factor RimM (179 aa).

Positions 102–179 (DGEYYWYQLE…EMKVDWDADF (78 aa)) constitute a PRC barrel domain.

The protein belongs to the RimM family. Binds ribosomal protein uS19.

The protein resides in the cytoplasm. Functionally, an accessory protein needed during the final step in the assembly of 30S ribosomal subunit, possibly for assembly of the head region. Essential for efficient processing of 16S rRNA. May be needed both before and after RbfA during the maturation of 16S rRNA. It has affinity for free ribosomal 30S subunits but not for 70S ribosomes. This Pseudomonas savastanoi pv. phaseolicola (strain 1448A / Race 6) (Pseudomonas syringae pv. phaseolicola (strain 1448A / Race 6)) protein is Ribosome maturation factor RimM.